Consider the following 116-residue polypeptide: Orphan antitoxin YagB (116 aa).

This sequence belongs to the CbeA/YafW/YfjZ antitoxin family.

In terms of biological role, putative antitoxin component of a type IV toxin-antitoxin (TA) system; its cognate toxin is unknown. This Escherichia coli (strain K12) protein is Orphan antitoxin YagB (yagB).